A 224-amino-acid polypeptide reads, in one-letter code: MAGGGGYGGASGKVDYVFKVVLIGDSAVGKSQLLARFARDEFSMDSKATIGVEFQTRTLSIEQKSIKAQIWDTAGQERYRAVTSAYYRGAVGAMLVYDMTKRETFEHIPRWLEELRAHADKNIVIILIGNKSDLEDQRAVPTEDAKEFAEKEGLFFLETSALNATNVENSFNTLMTQIYNTVNKKNLASEGDSNNPGSLAGKKILIPGSGQEIPAKTSTCCTSS.

Ala-2 carries the N-acetylalanine modification. 24–31 (GDSAVGKS) is a GTP binding site. The Effector region motif lies at 46 to 54 (SKATIGVEF). Residues 72-76 (DTAGQ), 130-133 (NKSD), and 160-161 (SA) each bind GTP. S-geranylgeranyl cysteine attachment occurs at residues Cys-220 and Cys-221.

This sequence belongs to the small GTPase superfamily. Rab family. Interacts with TCTP1. Expressed in roots, stems, leaves and flowers. Expressed in tips of growing root hair cells.

It localises to the early endosome membrane. Its subcellular location is the golgi apparatus. The protein localises to the trans-Golgi network membrane. Its function is as follows. Regulator of membrane trafficking. May be required for secretion of cell wall components in cells. The polypeptide is Ras-related protein RABA4b (Arabidopsis thaliana (Mouse-ear cress)).